Here is a 429-residue protein sequence, read N- to C-terminus: Glutamyl-tRNA reductase (429 aa).

Substrate is bound by residues 50–53 (TCNR), S116, 121–123 (EPQ), and Q127. The Nucleophile role is filled by C51. 196 to 201 (GAGEMA) is a binding site for NADP(+).

Belongs to the glutamyl-tRNA reductase family. Homodimer.

The enzyme catalyses (S)-4-amino-5-oxopentanoate + tRNA(Glu) + NADP(+) = L-glutamyl-tRNA(Glu) + NADPH + H(+). It functions in the pathway porphyrin-containing compound metabolism; protoporphyrin-IX biosynthesis; 5-aminolevulinate from L-glutamyl-tRNA(Glu): step 1/2. Its function is as follows. Catalyzes the NADPH-dependent reduction of glutamyl-tRNA(Glu) to glutamate 1-semialdehyde (GSA). The sequence is that of Glutamyl-tRNA reductase from Thermodesulfovibrio yellowstonii (strain ATCC 51303 / DSM 11347 / YP87).